An 813-amino-acid polypeptide reads, in one-letter code: Origin of replication complex subunit 1B (813 aa).

Residues M1–S109 are disordered. The segment covering K11–Y21 has biased composition (polar residues). The span at S27–H41 shows a compositional bias: low complexity. A compositionally biased stretch (basic residues) spans P43–S52. The short motif at P83–V90 is the Nuclear localization signal element. A histone H3 binding region spans residues D163–L187. A PHD-type zinc finger spans residues I166–K215. Zn(2+)-binding residues include C169, C172, C183, C186, H191, and C194. Residues P203–W207 are histone H3 binding. Positions 209 and 212 each coordinate Zn(2+). The BAH domain maps to P226–A344. A histone H3 binding region spans residues A319–D324. The tract at residues G349–M372 is disordered. The interval P436–N803 is necessary and sufficient for ORC complex assembly. Residue G471 to I479 participates in ATP binding. Positions 561 and 562 each coordinate Mg(2+). Residues E562, N595, and R660 each contribute to the ATP site.

It belongs to the ORC1 family. In terms of assembly, component of the origin recognition complex (ORC) composed of at least ORC1 (ORC1A or ORC1B), ORC2, ORC3, ORC4, ORC5 and ORC6. ORC is regulated in a cell-cycle and development dependent manner. It is sequentially assembled at the exit from anaphase of mitosis and disassembled as cells enter S phase. Interacts directly with ORC2 and ORC5. Binds mostly unmodified histone H3, and, with lower efficiency, H3K4me1 H3K4me2 and H3K4me3. In terms of tissue distribution, follow a cell-cycle regulation with a peak at the G1/S-phase. Mostly expressed in flower buds, and, to a lower exent, in roots, leaves and stems.

It localises to the nucleus. Its function is as follows. Essential protein required for ovules fertilization. Component of the origin recognition complex (ORC) that binds origins of replication. It has a role in both chromosomal replication and mating type transcriptional silencing. Binds to the ARS consensus sequence (ACS) of origins of replication. H3K4me3 effector that positively regulates the transcription of a subset of genes. In Arabidopsis thaliana (Mouse-ear cress), this protein is Origin of replication complex subunit 1B.